Here is a 250-residue protein sequence, read N- to C-terminus: Triosephosphate isomerase (250 aa).

A substrate-binding site is contributed by 10-12; the sequence is NWK. H96 (electrophile) is an active-site residue. E168 acts as the Proton acceptor in catalysis. Residues G174, S214, and 235 to 236 contribute to the substrate site; that span reads GG.

Belongs to the triosephosphate isomerase family. Homodimer.

The protein localises to the cytoplasm. It carries out the reaction D-glyceraldehyde 3-phosphate = dihydroxyacetone phosphate. It participates in carbohydrate biosynthesis; gluconeogenesis. It functions in the pathway carbohydrate degradation; glycolysis; D-glyceraldehyde 3-phosphate from glycerone phosphate: step 1/1. In terms of biological role, involved in the gluconeogenesis. Catalyzes stereospecifically the conversion of dihydroxyacetone phosphate (DHAP) to D-glyceraldehyde-3-phosphate (G3P). In Streptococcus suis (strain 98HAH33), this protein is Triosephosphate isomerase.